The primary structure comprises 321 residues: Arginine-hydroxylase NDUFAF5, mitochondrial (321 aa).

The N-terminal 25 residues, 1-25 (MNVSVKSLRGVSRTWRSFSSRQGMN), are a transit peptide targeting the mitochondrion.

Belongs to the methyltransferase superfamily. In terms of assembly, interacts with NDUFS7.

Its subcellular location is the mitochondrion inner membrane. In terms of biological role, arginine hydroxylase that mediates hydroxylation of 'Arg-111' of NDUFS7 and is involved in the assembly of mitochondrial NADH:ubiquinone oxidoreductase complex (complex I, MT-ND1) at early stages. May also have methyltransferase activity. The polypeptide is Arginine-hydroxylase NDUFAF5, mitochondrial (Danio rerio (Zebrafish)).